The chain runs to 190 residues: Large ribosomal subunit protein uL10 (190 aa).

A disordered region spans residues alanine 170–alanine 190.

Belongs to the universal ribosomal protein uL10 family. Part of the ribosomal stalk of the 50S ribosomal subunit. The N-terminus interacts with L11 and the large rRNA to form the base of the stalk. The C-terminus forms an elongated spine to which L12 dimers bind in a sequential fashion forming a multimeric L10(L12)X complex.

In terms of biological role, forms part of the ribosomal stalk, playing a central role in the interaction of the ribosome with GTP-bound translation factors. This chain is Large ribosomal subunit protein uL10, found in Kineococcus radiotolerans (strain ATCC BAA-149 / DSM 14245 / SRS30216).